Consider the following 277-residue polypeptide: MAVRGILGRQRREYRTPEPHPSGARPPKLGDLVPEHVAIVMDGNGRWAKERGLPRTEGHKVGAEQVMDVLQGAIEMGVGNISLYAFSTENWKRSPEEVRFLMNFNRDFIRKSRDTLDELGVRVRWAGRMPRLWKSVAKELQVAQEQTKDNDRLTLYFCMNYGGRAEIADAAQALAEDVRAGKLDPAKVNEKTLAKYLYYPDMPDVDLFLRPSGEQRTSNYLLWQSAYAEMVFQDVLWPDFDRRDLWRACLEFASRDRRFGGAIPNEELLAMEGRSTR.

A disordered region spans residues 1–30; the sequence is MAVRGILGRQRREYRTPEPHPSGARPPKLG. The active site involves aspartate 42. Aspartate 42 is a binding site for Mg(2+). Residues 43 to 46, tryptophan 47, arginine 55, histidine 59, and 87 to 89 each bind substrate; these read GNGR and STE. The active-site Proton acceptor is the asparagine 90. Substrate is bound by residues tryptophan 91, arginine 93, arginine 210, and 216–218; that span reads RTS. Residue glutamate 229 coordinates Mg(2+).

This sequence belongs to the UPP synthase family. Homodimer. Requires Mg(2+) as cofactor.

In terms of biological role, catalyzes the condensation of isopentenyl diphosphate (IPP) with allylic pyrophosphates generating different type of terpenoids. The chain is Isoprenyl transferase 1 from Streptomyces coelicolor (strain ATCC BAA-471 / A3(2) / M145).